We begin with the raw amino-acid sequence, 224 residues long: Peroxiredoxin-6 (224 aa).

The Thioredoxin domain maps to 5-169 (LLLGDVAPNF…ILRVVISLQL (165 aa)). The required and sufficient for targeting to lysosomes and lamellar bodies stretch occupies residues 31 to 40 (DSWGILFSHP). At T44 the chain carries Phosphothreonine. C47 acts as the Cysteine sulfenic acid (-SOH) intermediate; for peroxidase activity in catalysis. N6-acetyllysine is present on K63. Phosphotyrosine is present on Y89. Catalysis depends on D140, which acts as the For phospholipase activity. Phosphothreonine; by MAPK is present on T177. K209 bears the N6-acetyllysine; alternate mark. Position 209 is an N6-succinyllysine; alternate (K209).

It belongs to the peroxiredoxin family. Prx6 subfamily. Homodimer. Interacts with GSTP1; mediates PRDX6 glutathionylation and regeneration. Interacts with APEX1. Interacts with STH. May interact with FAM168B. May interact with HTR2A. Irreversibly inactivated by overoxidation of Cys-47 to sulfinic acid (Cys-SO(2)H) and sulfonic acid (Cys-SO(3)H) forms upon oxidative stress. In terms of processing, phosphorylation at Thr-177 by MAP kinases increases the phospholipase activity of the enzyme. The phosphorylated form exhibits a greater lysophosphatidylcholine acyltransferase activity compared to the non-phosphorylated form.

The protein localises to the cytoplasm. It is found in the lysosome. The catalysed reaction is a hydroperoxide + 2 glutathione = an alcohol + glutathione disulfide + H2O. The enzyme catalyses a 1,2-diacyl-sn-glycero-3-phosphocholine + H2O = a 1-acyl-sn-glycero-3-phosphocholine + a fatty acid + H(+). It catalyses the reaction a 1-acyl-sn-glycero-3-phosphocholine + an acyl-CoA = a 1,2-diacyl-sn-glycero-3-phosphocholine + CoA. It carries out the reaction 1-hexadecanoyl-sn-glycero-3-phosphocholine + hexadecanoyl-CoA = 1,2-dihexadecanoyl-sn-glycero-3-phosphocholine + CoA. The catalysed reaction is 1,2-dihexadecanoyl-sn-glycero-3-phosphocholine + H2O = 1-hexadecanoyl-sn-glycero-3-phosphocholine + hexadecanoate + H(+). Its function is as follows. Thiol-specific peroxidase that catalyzes the reduction of hydrogen peroxide and organic hydroperoxides to water and alcohols, respectively. Can reduce H(2)O(2) and short chain organic, fatty acid, and phospholipid hydroperoxides. Also has phospholipase activity, and can therefore either reduce the oxidized sn-2 fatty acyl group of phospholipids (peroxidase activity) or hydrolyze the sn-2 ester bond of phospholipids (phospholipase activity). These activities are dependent on binding to phospholipids at acidic pH and to oxidized phospholipds at cytosolic pH. Plays a role in cell protection against oxidative stress by detoxifying peroxides and in phospholipid homeostasis. Exhibits acyl-CoA-dependent lysophospholipid acyltransferase which mediates the conversion of lysophosphatidylcholine (1-acyl-sn-glycero-3-phosphocholine or LPC) into phosphatidylcholine (1,2-diacyl-sn-glycero-3-phosphocholine or PC). Shows a clear preference for LPC as the lysophospholipid and for palmitoyl CoA as the fatty acyl substrate. The polypeptide is Peroxiredoxin-6 (PRDX6) (Pongo abelii (Sumatran orangutan)).